A 227-amino-acid chain; its full sequence is ATP-dependent dethiobiotin synthetase BioD (227 aa).

13–18 (DIGKTY) contacts ATP. T17 contributes to the Mg(2+) binding site. K38 is an active-site residue. S42 is a binding site for substrate. ATP-binding positions include D55, 116-119 (EGSG), and 179-180 (NN). Residues D55 and E116 each contribute to the Mg(2+) site.

The protein belongs to the dethiobiotin synthetase family. As to quaternary structure, homodimer. The cofactor is Mg(2+).

It is found in the cytoplasm. It carries out the reaction (7R,8S)-7,8-diammoniononanoate + CO2 + ATP = (4R,5S)-dethiobiotin + ADP + phosphate + 3 H(+). Its pathway is cofactor biosynthesis; biotin biosynthesis; biotin from 7,8-diaminononanoate: step 1/2. Catalyzes a mechanistically unusual reaction, the ATP-dependent insertion of CO2 between the N7 and N8 nitrogen atoms of 7,8-diaminopelargonic acid (DAPA, also called 7,8-diammoniononanoate) to form a ureido ring. The chain is ATP-dependent dethiobiotin synthetase BioD from Clostridium botulinum (strain Loch Maree / Type A3).